A 372-amino-acid polypeptide reads, in one-letter code: DNA replication and repair protein RecF (372 aa).

Residue 30-37 coordinates ATP; it reads GENGQGKT.

The protein belongs to the RecF family.

The protein resides in the cytoplasm. Its function is as follows. The RecF protein is involved in DNA metabolism; it is required for DNA replication and normal SOS inducibility. RecF binds preferentially to single-stranded, linear DNA. It also seems to bind ATP. The sequence is that of DNA replication and repair protein RecF from Anaeromyxobacter dehalogenans (strain 2CP-C).